The chain runs to 539 residues: Eukaryotic translation initiation factor 3 subunit L (539 aa).

The 209-residue stretch at 306 to 514 folds into the PCI domain; it reads TFSDILLYIQ…IHIADTKVSH (209 aa).

It belongs to the eIF-3 subunit L family. Component of the eukaryotic translation initiation factor 3 (eIF-3) complex. The eIF-3 complex interacts with pix.

It localises to the cytoplasm. In terms of biological role, component of the eukaryotic translation initiation factor 3 (eIF-3) complex, which is involved in protein synthesis of a specialized repertoire of mRNAs and, together with other initiation factors, stimulates binding of mRNA and methionyl-tRNAi to the 40S ribosome. The eIF-3 complex specifically targets and initiates translation of a subset of mRNAs involved in cell proliferation. The chain is Eukaryotic translation initiation factor 3 subunit L from Drosophila yakuba (Fruit fly).